We begin with the raw amino-acid sequence, 311 residues long: Ribosomal protein L11 methyltransferase (311 aa).

Residues threonine 162, glycine 183, aspartate 205, and asparagine 248 each coordinate S-adenosyl-L-methionine.

Belongs to the methyltransferase superfamily. PrmA family.

The protein localises to the cytoplasm. The catalysed reaction is L-lysyl-[protein] + 3 S-adenosyl-L-methionine = N(6),N(6),N(6)-trimethyl-L-lysyl-[protein] + 3 S-adenosyl-L-homocysteine + 3 H(+). Methylates ribosomal protein L11. The chain is Ribosomal protein L11 methyltransferase from Bacillus velezensis (strain DSM 23117 / BGSC 10A6 / LMG 26770 / FZB42) (Bacillus amyloliquefaciens subsp. plantarum).